We begin with the raw amino-acid sequence, 292 residues long: Protease HtpX (292 aa).

The next 2 membrane-spanning stretches (helical) occupy residues 4–24 and 32–52; these read IILF…ILAV and IYGL…LSLI. H139 contacts Zn(2+). E140 is an active-site residue. H143 serves as a coordination point for Zn(2+). Transmembrane regions (helical) follow at residues 150-170 and 193-213; these read ITMT…SRII and FLFF…ASII. E222 contributes to the Zn(2+) binding site.

It belongs to the peptidase M48B family. It depends on Zn(2+) as a cofactor.

The protein localises to the cell membrane. The chain is Protease HtpX from Buchnera aphidicola subsp. Schizaphis graminum (strain Sg).